The primary structure comprises 251 residues: UPF0246 protein DSY0297 (251 aa).

The protein belongs to the UPF0246 family.

The sequence is that of UPF0246 protein DSY0297 from Desulfitobacterium hafniense (strain Y51).